The chain runs to 144 residues: Large ribosomal subunit protein uL15 (144 aa).

The segment at 1-54 is disordered; the sequence is MHLNTLKPAEGAKKLAKRKGRGQGSGNGKMAGRGHKGQKSRSGGMPKIGFEGGQ. Residues 22–31 show a composition bias toward gly residues; it reads GQGSGNGKMA.

This sequence belongs to the universal ribosomal protein uL15 family. Part of the 50S ribosomal subunit.

Binds to the 23S rRNA. The chain is Large ribosomal subunit protein uL15 from Hydrogenovibrio crunogenus (strain DSM 25203 / XCL-2) (Thiomicrospira crunogena).